We begin with the raw amino-acid sequence, 304 residues long: tRNA dimethylallyltransferase (304 aa).

Position 10 to 17 (10 to 17 (GPTASGKT)) interacts with ATP. Residue 12 to 17 (TASGKT) coordinates substrate. Interaction with substrate tRNA regions lie at residues 35-38 (DSAL), 159-163 (QRLSR), and 240-245 (RCVGYR).

Belongs to the IPP transferase family. Monomer. It depends on Mg(2+) as a cofactor.

It catalyses the reaction adenosine(37) in tRNA + dimethylallyl diphosphate = N(6)-dimethylallyladenosine(37) in tRNA + diphosphate. Functionally, catalyzes the transfer of a dimethylallyl group onto the adenine at position 37 in tRNAs that read codons beginning with uridine, leading to the formation of N6-(dimethylallyl)adenosine (i(6)A). The protein is tRNA dimethylallyltransferase of Shewanella putrefaciens (strain CN-32 / ATCC BAA-453).